The following is a 132-amino-acid chain: ATP synthase epsilon chain (132 aa).

The protein belongs to the ATPase epsilon chain family. F-type ATPases have 2 components, CF(1) - the catalytic core - and CF(0) - the membrane proton channel. CF(1) has five subunits: alpha(3), beta(3), gamma(1), delta(1), epsilon(1). CF(0) has three main subunits: a, b and c.

Its subcellular location is the cell inner membrane. Functionally, produces ATP from ADP in the presence of a proton gradient across the membrane. This is ATP synthase epsilon chain from Anaeromyxobacter dehalogenans (strain 2CP-C).